A 132-amino-acid chain; its full sequence is Small ribosomal subunit protein uS8 (132 aa).

This sequence belongs to the universal ribosomal protein uS8 family. In terms of assembly, part of the 30S ribosomal subunit. Contacts proteins S5 and S12.

Its function is as follows. One of the primary rRNA binding proteins, it binds directly to 16S rRNA central domain where it helps coordinate assembly of the platform of the 30S subunit. The protein is Small ribosomal subunit protein uS8 of Ehrlichia canis (strain Jake).